The following is a 466-amino-acid chain: Asparagine--tRNA ligase (466 aa).

It belongs to the class-II aminoacyl-tRNA synthetase family. In terms of assembly, homodimer.

The protein localises to the cytoplasm. It carries out the reaction tRNA(Asn) + L-asparagine + ATP = L-asparaginyl-tRNA(Asn) + AMP + diphosphate + H(+). The protein is Asparagine--tRNA ligase of Enterobacter sp. (strain 638).